The primary structure comprises 1331 residues: Beta-mannanase/endoglucanase A (1331 aa).

The signal sequence occupies residues 1–41; sequence MRLKTKIRKKWLSVLCTVVFLLNILFIANVTILPKVGAATS. The segment at 42 to 325 is catalytic (mannanase); sequence NDGVVKIDTS…YKTNAIGTSS (284 aa). Residue glutamate 162 is the Proton donor of the active site. Glutamate 257 (nucleophile) is an active-site residue. Disordered regions lie at residues 319-363, 515-566, and 717-780; these read NAIG…TPAT, PSGA…TPAT, and EPSG…PLPT. Over residues 323–335 the composition is skewed to low complexity; it reads TSSTPTPTSTVTP. Positions 363 to 516 constitute a CBM3 1 domain; sequence TSGQIKVLYA…GVLVWGQEPS (154 aa). Composition is skewed to pro residues over residues 521 to 541 and 551 to 561; these read APAPTATPTPTPTVTPTPTVT and TPTPTPTPTPV. The CBM3 2 domain occupies 566–719; that stretch reads TGGQIKVLYA…GVLVWGQEPS (154 aa). Positions 721-735 are enriched in low complexity; that stretch reads TTPSPTSTPTVTVTP. Composition is skewed to pro residues over residues 736 to 756 and 766 to 780; these read TPTPTPTPTPTPTVTPTPTVT and TPTPTPIPTVTPLPT. Residues 781–1331 are catalytic (endoglucanase); sequence ISPSPSVVEI…RNLVFMRALV (551 aa).

In the N-terminal section; belongs to the glycosyl hydrolase 5 (cellulase A) family. This sequence in the C-terminal section; belongs to the glycosyl hydrolase 44 (cellulase J) family.

The enzyme catalyses Random hydrolysis of (1-&gt;4)-beta-D-mannosidic linkages in mannans, galactomannans and glucomannans.. It catalyses the reaction Endohydrolysis of (1-&gt;4)-beta-D-glucosidic linkages in cellulose, lichenin and cereal beta-D-glucans.. In terms of biological role, degradation of hemicelluloses, the second most abundant polysaccharides in nature. Contains two catalytic domains with mannanase and endoglucanase activities. This Caldicellulosiruptor saccharolyticus (Caldocellum saccharolyticum) protein is Beta-mannanase/endoglucanase A (manA).